Consider the following 293-residue polypeptide: Nucleotide-binding protein Bcer98_3698 (293 aa).

Residue 14-21 (GMSGAGKT) participates in ATP binding. A GTP-binding site is contributed by 65–68 (DLRG).

The protein belongs to the RapZ-like family.

Displays ATPase and GTPase activities. The protein is Nucleotide-binding protein Bcer98_3698 of Bacillus cytotoxicus (strain DSM 22905 / CIP 110041 / 391-98 / NVH 391-98).